The following is a 217-amino-acid chain: Thiamine-phosphate synthase (217 aa).

Residues 38 to 42 (QYRDK) and asparagine 70 contribute to the 4-amino-2-methyl-5-(diphosphooxymethyl)pyrimidine site. The Mg(2+) site is built by aspartate 71 and aspartate 90. Serine 109 lines the 4-amino-2-methyl-5-(diphosphooxymethyl)pyrimidine pocket. 136–138 (SIT) serves as a coordination point for 2-[(2R,5Z)-2-carboxy-4-methylthiazol-5(2H)-ylidene]ethyl phosphate. A 4-amino-2-methyl-5-(diphosphooxymethyl)pyrimidine-binding site is contributed by lysine 139. Glycine 166 is a binding site for 2-[(2R,5Z)-2-carboxy-4-methylthiazol-5(2H)-ylidene]ethyl phosphate.

Belongs to the thiamine-phosphate synthase family. The cofactor is Mg(2+).

It carries out the reaction 2-[(2R,5Z)-2-carboxy-4-methylthiazol-5(2H)-ylidene]ethyl phosphate + 4-amino-2-methyl-5-(diphosphooxymethyl)pyrimidine + 2 H(+) = thiamine phosphate + CO2 + diphosphate. The catalysed reaction is 2-(2-carboxy-4-methylthiazol-5-yl)ethyl phosphate + 4-amino-2-methyl-5-(diphosphooxymethyl)pyrimidine + 2 H(+) = thiamine phosphate + CO2 + diphosphate. The enzyme catalyses 4-methyl-5-(2-phosphooxyethyl)-thiazole + 4-amino-2-methyl-5-(diphosphooxymethyl)pyrimidine + H(+) = thiamine phosphate + diphosphate. It participates in cofactor biosynthesis; thiamine diphosphate biosynthesis; thiamine phosphate from 4-amino-2-methyl-5-diphosphomethylpyrimidine and 4-methyl-5-(2-phosphoethyl)-thiazole: step 1/1. In terms of biological role, condenses 4-methyl-5-(beta-hydroxyethyl)thiazole monophosphate (THZ-P) and 2-methyl-4-amino-5-hydroxymethyl pyrimidine pyrophosphate (HMP-PP) to form thiamine monophosphate (TMP). This Nitrosococcus oceani (strain ATCC 19707 / BCRC 17464 / JCM 30415 / NCIMB 11848 / C-107) protein is Thiamine-phosphate synthase.